Consider the following 677-residue polypeptide: Mitochondrial disaggregase (677 aa).

Residues 1–57 constitute a mitochondrion transit peptide; sequence MMLSAVLRRTAPAPRLFLGLIKSPSLQSRGGAYNRSVITGDRGEPQRLRTAAWVRPG. Residues 64–103 are disordered; it reads PGRGAATGGRRGERTEIPYLTAASSGRGPSPEETLPGQDS. The interval 92-126 is autoinhibitory; sequence PSPEETLPGQDSWNGVPNKAGLGMWALAMALVVQC. 4 ANK repeats span residues 133–162, 166–195, 235–265, and 268–297; these read NKDA…DVNA, LGWT…DPNL, KGCT…PLQR, and MGHT…EKQR. The ATP site is built by His316, Ile318, Ser353, Gly354, Ile355, Gly356, Lys357, Thr358, Glu425, and Asn466. The segment at 477-505 is regulatory; slows ATPase and disaggregase activities; the sequence is LQLRQEALEMSRNRIAENLGDVQISDKIT. Residue Arg531 coordinates ATP. Residue Lys559 is modified to N6-acetyllysine. Arg590 is an ATP binding site.

The protein belongs to the ClpA/ClpB family. As to quaternary structure, homododecamer when substrate-bound; the homododecamer consists of 2 homohexamers stacked head-to-head via ANK repeat-mediated interactions. The active substrate-bound form is likely to exist in a dynamic equilibrium between homohexamers and homododecamers. Homotetradecamer in the unbound state which is remodeled upon substrate binding into the homododecamer. Interacts with PHB and PHB2. Interacts with MAVS; the interaction is enhanced by Sendai virus infection. Post-translationally, proteolytically cleaved by protease PARL. ATP-dependent protein disaggregase activity is stimulated by PARL-mediated cleavage of the N-terminal autoinhibitory peptide.

It is found in the mitochondrion intermembrane space. It carries out the reaction ATP + H2O = ADP + phosphate + H(+). Its activity is regulated as follows. Disaggregase activity is inhibited by ADP. In terms of biological role, functions as a regulatory ATPase and participates in secretion/protein trafficking process. Has ATP-dependent protein disaggregase activity and is required to maintain the solubility of key mitochondrial proteins. Involved in mitochondrial-mediated antiviral innate immunity, activates RIG-I-mediated signal transduction and production of IFNB1 and pro-inflammatory cytokine IL6. Plays a role in granulocyte differentiation. The polypeptide is Mitochondrial disaggregase (Rattus norvegicus (Rat)).